We begin with the raw amino-acid sequence, 398 residues long: Dual-specificity RNA methyltransferase RlmN (398 aa).

Catalysis depends on Glu121, which acts as the Proton acceptor. The Radical SAM core domain occupies 127–370; it reads ETDRGTLCVS…VRTPRGRDIL (244 aa). Residues Cys134 and Cys373 are joined by a disulfide bond. Residues Cys141, Cys145, and Cys148 each contribute to the [4Fe-4S] cluster site. S-adenosyl-L-methionine is bound by residues 199 to 200, Ser231, 253 to 255, and Asn330; these read GE and SLH. The active-site S-methylcysteine intermediate is the Cys373.

It belongs to the radical SAM superfamily. RlmN family. The cofactor is [4Fe-4S] cluster.

The protein resides in the cytoplasm. It carries out the reaction adenosine(2503) in 23S rRNA + 2 reduced [2Fe-2S]-[ferredoxin] + 2 S-adenosyl-L-methionine = 2-methyladenosine(2503) in 23S rRNA + 5'-deoxyadenosine + L-methionine + 2 oxidized [2Fe-2S]-[ferredoxin] + S-adenosyl-L-homocysteine. The enzyme catalyses adenosine(37) in tRNA + 2 reduced [2Fe-2S]-[ferredoxin] + 2 S-adenosyl-L-methionine = 2-methyladenosine(37) in tRNA + 5'-deoxyadenosine + L-methionine + 2 oxidized [2Fe-2S]-[ferredoxin] + S-adenosyl-L-homocysteine. In terms of biological role, specifically methylates position 2 of adenine 2503 in 23S rRNA and position 2 of adenine 37 in tRNAs. m2A2503 modification seems to play a crucial role in the proofreading step occurring at the peptidyl transferase center and thus would serve to optimize ribosomal fidelity. This is Dual-specificity RNA methyltransferase RlmN from Rhodopseudomonas palustris (strain BisB5).